A 1085-amino-acid polypeptide reads, in one-letter code: Toxin VasX (1085 aa).

The disordered stretch occupies residues 1–20; the sequence is MSNPNQAAKTGQTNDAQNPA. The next 4 helical transmembrane spans lie at 753-773, 813-833, 860-880, and 884-904; these read ALGE…AISA, IALV…ESWG, IIFY…PSIA, and AGWM…GVIL.

It is found in the secreted. Its subcellular location is the host membrane. Its function is as follows. Toxin secreted by the type VI (T6SS) secretion system that acts on prokaryotic target cells. Acts in conjunction with VasW, an accessory protein to VasX, to compromise the inner membrane of prokaryotic target cells. This is Toxin VasX from Vibrio cholerae serotype O1 (strain ATCC 39315 / El Tor Inaba N16961).